Reading from the N-terminus, the 306-residue chain is N-acetylmuramic acid 6-phosphate etherase (306 aa).

The SIS domain occupies 55–218 (IVPRMKKGGR…STGVMIKLGK (164 aa)). Residue glutamate 83 is the Proton donor of the active site. The active site involves glutamate 114.

Belongs to the GCKR-like family. MurNAc-6-P etherase subfamily. As to quaternary structure, homodimer.

It carries out the reaction N-acetyl-D-muramate 6-phosphate + H2O = N-acetyl-D-glucosamine 6-phosphate + (R)-lactate. It functions in the pathway amino-sugar metabolism; N-acetylmuramate degradation. Its function is as follows. Specifically catalyzes the cleavage of the D-lactyl ether substituent of MurNAc 6-phosphate, producing GlcNAc 6-phosphate and D-lactate. This Caldanaerobacter subterraneus subsp. tengcongensis (strain DSM 15242 / JCM 11007 / NBRC 100824 / MB4) (Thermoanaerobacter tengcongensis) protein is N-acetylmuramic acid 6-phosphate etherase.